We begin with the raw amino-acid sequence, 573 residues long: PCNA-interacting partner (573 aa).

Residues 492–532 form a disordered region; sequence TGGQVKNKPCKNVANKRSKRKQVDIQSETTNAQENEPPQKK. Positions 515-527 are enriched in polar residues; that stretch reads DIQSETTNAQENE.

This sequence belongs to the PARI family.

It localises to the cytoplasm. The protein resides in the nucleus. Functionally, required to suppress inappropriate homologous recombination, thereby playing a central role DNA repair and in the maintenance of genomic stability. The polypeptide is PCNA-interacting partner (parpbp) (Xenopus tropicalis (Western clawed frog)).